Here is a 227-residue protein sequence, read N- to C-terminus: Cytochrome c oxidase subunit 2 (227 aa).

Residues 1–14 (MAYPFQLGLQDATS) are Mitochondrial intermembrane-facing. Residues 15–45 (PIMEELLHFHDHTLMIVFLISSLVLYIISSM) form a helical membrane-spanning segment. At 46–59 (LTTKLTHTSTMDAQ) the chain is on the mitochondrial matrix side. Residues 60-87 (EVETVWTILPAIILVLIALPSLRILYMM) traverse the membrane as a helical segment. Residues 88–227 (DETNNPSLTV…YFETWSALMV (140 aa)) lie on the Mitochondrial intermembrane side of the membrane. Positions 161, 196, 198, 200, 204, and 207 each coordinate Cu cation. Glu-198 serves as a coordination point for Mg(2+). Tyr-218 carries the phosphotyrosine modification.

This sequence belongs to the cytochrome c oxidase subunit 2 family. Component of the cytochrome c oxidase (complex IV, CIV), a multisubunit enzyme composed of 14 subunits. The complex is composed of a catalytic core of 3 subunits MT-CO1, MT-CO2 and MT-CO3, encoded in the mitochondrial DNA, and 11 supernumerary subunits COX4I, COX5A, COX5B, COX6A, COX6B, COX6C, COX7A, COX7B, COX7C, COX8 and NDUFA4, which are encoded in the nuclear genome. The complex exists as a monomer or a dimer and forms supercomplexes (SCs) in the inner mitochondrial membrane with NADH-ubiquinone oxidoreductase (complex I, CI) and ubiquinol-cytochrome c oxidoreductase (cytochrome b-c1 complex, complex III, CIII), resulting in different assemblies (supercomplex SCI(1)III(2)IV(1) and megacomplex MCI(2)III(2)IV(2)). Found in a complex with TMEM177, COA6, COX18, COX20, SCO1 and SCO2. Interacts with TMEM177 in a COX20-dependent manner. Interacts with COX20. Interacts with COX16. Cu cation is required as a cofactor.

The protein localises to the mitochondrion inner membrane. It carries out the reaction 4 Fe(II)-[cytochrome c] + O2 + 8 H(+)(in) = 4 Fe(III)-[cytochrome c] + 2 H2O + 4 H(+)(out). In terms of biological role, component of the cytochrome c oxidase, the last enzyme in the mitochondrial electron transport chain which drives oxidative phosphorylation. The respiratory chain contains 3 multisubunit complexes succinate dehydrogenase (complex II, CII), ubiquinol-cytochrome c oxidoreductase (cytochrome b-c1 complex, complex III, CIII) and cytochrome c oxidase (complex IV, CIV), that cooperate to transfer electrons derived from NADH and succinate to molecular oxygen, creating an electrochemical gradient over the inner membrane that drives transmembrane transport and the ATP synthase. Cytochrome c oxidase is the component of the respiratory chain that catalyzes the reduction of oxygen to water. Electrons originating from reduced cytochrome c in the intermembrane space (IMS) are transferred via the dinuclear copper A center (CU(A)) of subunit 2 and heme A of subunit 1 to the active site in subunit 1, a binuclear center (BNC) formed by heme A3 and copper B (CU(B)). The BNC reduces molecular oxygen to 2 water molecules using 4 electrons from cytochrome c in the IMS and 4 protons from the mitochondrial matrix. This is Cytochrome c oxidase subunit 2 (MT-CO2) from Chrysocyon brachyurus (Maned wolf).